The following is a 207-amino-acid chain: Large ribosomal subunit protein bL25 (207 aa).

Belongs to the bacterial ribosomal protein bL25 family. CTC subfamily. In terms of assembly, part of the 50S ribosomal subunit; part of the 5S rRNA/L5/L18/L25 subcomplex. Contacts the 5S rRNA. Binds to the 5S rRNA independently of L5 and L18.

Its function is as follows. This is one of the proteins that binds to the 5S RNA in the ribosome where it forms part of the central protuberance. In Dictyoglomus turgidum (strain DSM 6724 / Z-1310), this protein is Large ribosomal subunit protein bL25.